A 797-amino-acid polypeptide reads, in one-letter code: Kinesin-like protein Klp68D (797 aa).

In terms of domain architecture, Kinesin motor spans 19 to 344 (CVQVVVRCRP…LRYASRAKSI (326 aa)). 106-113 (GQTGTGKT) is an ATP binding site. A coiled-coil region spans residues 350–384 (KNEDPQDAKLKEYQEEIERLKRLIAPQQQQRSEKQ). 3 disordered regions span residues 371–450 (RLIA…ELER), 610–656 (SSFP…PSSL), and 722–797 (ANSS…LVNK). Residues 386–396 (TIKKQRVKKPK) show a composition bias toward basic residues. Acidic residues predominate over residues 417 to 431 (QVDEDRDSDGDGAES). Basic and acidic residues predominate over residues 432 to 450 (ESDKENEAEVAKSNEELER). Residues 432-580 (ESDKENEAEV…LVKELKRQLL (149 aa)) are a coiled coil. Residues 626–638 (GYRRPVSHPQRRR) are compositionally biased toward basic residues. A compositionally biased stretch (low complexity) spans 782–791 (KKPASAYPKA).

The protein belongs to the TRAFAC class myosin-kinesin ATPase superfamily. Kinesin family. Kinesin II subfamily.

It is found in the cytoplasm. It localises to the cytoskeleton. Plus-end directed microtubule motor that may be used for anterograde axonal transport and could conceivably move cargos in fly neurons different than those moved by kinesin heavy chain or other plus-end directed motors. This is Kinesin-like protein Klp68D from Drosophila pseudoobscura pseudoobscura (Fruit fly).